A 115-amino-acid polypeptide reads, in one-letter code: Phosphoribosyl-ATP pyrophosphatase (115 aa).

This sequence belongs to the PRA-PH family.

The protein resides in the cytoplasm. The enzyme catalyses 1-(5-phospho-beta-D-ribosyl)-ATP + H2O = 1-(5-phospho-beta-D-ribosyl)-5'-AMP + diphosphate + H(+). It functions in the pathway amino-acid biosynthesis; L-histidine biosynthesis; L-histidine from 5-phospho-alpha-D-ribose 1-diphosphate: step 2/9. The protein is Phosphoribosyl-ATP pyrophosphatase of Saccharophagus degradans (strain 2-40 / ATCC 43961 / DSM 17024).